A 465-amino-acid chain; its full sequence is Ribulose bisphosphate carboxylase large chain (465 aa).

At K4 the chain carries N6,N6,N6-trimethyllysine. Residues N113 and T163 each coordinate substrate. The Proton acceptor role is filled by K165. A substrate-binding site is contributed by K167. Positions 191, 193, and 194 each coordinate Mg(2+). N6-carboxylysine is present on K191. Residue H284 is the Proton acceptor of the active site. Substrate is bound by residues R285, H317, and S369.

Belongs to the RuBisCO large chain family. Type I subfamily. As to quaternary structure, heterohexadecamer of 8 large chains and 8 small chains; disulfide-linked. The disulfide link is formed within the large subunit homodimers. Mg(2+) serves as cofactor. The disulfide bond which can form in the large chain dimeric partners within the hexadecamer appears to be associated with oxidative stress and protein turnover.

It localises to the plastid. The protein localises to the chloroplast. The catalysed reaction is 2 (2R)-3-phosphoglycerate + 2 H(+) = D-ribulose 1,5-bisphosphate + CO2 + H2O. It catalyses the reaction D-ribulose 1,5-bisphosphate + O2 = 2-phosphoglycolate + (2R)-3-phosphoglycerate + 2 H(+). Its function is as follows. RuBisCO catalyzes two reactions: the carboxylation of D-ribulose 1,5-bisphosphate, the primary event in carbon dioxide fixation, as well as the oxidative fragmentation of the pentose substrate in the photorespiration process. Both reactions occur simultaneously and in competition at the same active site. The sequence is that of Ribulose bisphosphate carboxylase large chain from Casuarina equisetifolia (Beach she-oak).